The following is a 267-amino-acid chain: Cilia- and flagella-associated protein 300 (267 aa).

It belongs to the CFAP300 family. As to quaternary structure, interacts with DNAAF2. As to expression, expressed in nasal epithelial cells.

The protein localises to the cytoplasm. It is found in the cytoskeleton. It localises to the cilium axoneme. In terms of biological role, cilium- and flagellum-specific protein that plays a role in axonemal structure organization and motility. May play a role in outer and inner dynein arm assembly. This is Cilia- and flagella-associated protein 300 from Homo sapiens (Human).